We begin with the raw amino-acid sequence, 342 residues long: Phosphate acyltransferase (342 aa).

Belongs to the PlsX family. Homodimer. Probably interacts with PlsY.

The protein localises to the cytoplasm. The catalysed reaction is a fatty acyl-[ACP] + phosphate = an acyl phosphate + holo-[ACP]. It participates in lipid metabolism; phospholipid metabolism. Its function is as follows. Catalyzes the reversible formation of acyl-phosphate (acyl-PO(4)) from acyl-[acyl-carrier-protein] (acyl-ACP). This enzyme utilizes acyl-ACP as fatty acyl donor, but not acyl-CoA. This Leuconostoc mesenteroides subsp. mesenteroides (strain ATCC 8293 / DSM 20343 / BCRC 11652 / CCM 1803 / JCM 6124 / NCDO 523 / NBRC 100496 / NCIMB 8023 / NCTC 12954 / NRRL B-1118 / 37Y) protein is Phosphate acyltransferase.